Here is a 519-residue protein sequence, read N- to C-terminus: Light-independent protochlorophyllide reductase subunit B (519 aa).

A [4Fe-4S] cluster-binding site is contributed by Asp36. Asp274 serves as the catalytic Proton donor. 409–410 (GL) lines the substrate pocket. Residues 426 to 465 (DEAGPSHHGGHSPKPSEAARTPDKVEERADPAPEAPQTGS) form a disordered region. The segment covering 445–456 (RTPDKVEERADP) has biased composition (basic and acidic residues).

It belongs to the ChlB/BchB/BchZ family. Protochlorophyllide reductase is composed of three subunits; BchL, BchN and BchB. Forms a heterotetramer of two BchB and two BchN subunits. Requires [4Fe-4S] cluster as cofactor.

The enzyme catalyses chlorophyllide a + oxidized 2[4Fe-4S]-[ferredoxin] + 2 ADP + 2 phosphate = protochlorophyllide a + reduced 2[4Fe-4S]-[ferredoxin] + 2 ATP + 2 H2O. It participates in porphyrin-containing compound metabolism; bacteriochlorophyll biosynthesis (light-independent). Its function is as follows. Component of the dark-operative protochlorophyllide reductase (DPOR) that uses Mg-ATP and reduced ferredoxin to reduce ring D of protochlorophyllide (Pchlide) to form chlorophyllide a (Chlide). This reaction is light-independent. The NB-protein (BchN-BchB) is the catalytic component of the complex. The chain is Light-independent protochlorophyllide reductase subunit B from Jannaschia sp. (strain CCS1).